The chain runs to 440 residues: VGFKAGVKDYRLTYYTPEYKTKDTDILAAFRMTPQPGVPAEEAGAAVAAESSTGTWTTVWTDGLTSLDRYKGRCYDIEPVAGEENQYIAYVAYPLDLFEEGSVTNMLTSIVGNVFGXKAXRALRLEDLRILPAYSKTFIGPPHGIQVERDKLNKYGRPLLGCTIKPKLGLCAKNYGRAVYECLRGGLDFTKDDENVNSQPSMRWRDRFLFVAEALFKAQAETGEVKGHYLNATAGTCEEMIKRATFARELGAPIVMHDYLTGGFTANTSLAFYCRDNGLLLHIHRAMHAVIDRQRNHGMHLRVLAKALRMSGGDHIHAGTVVGKLEGEREVTLGFVDLLRDDYIEKDRSRGIYFTQDWVSMPGVLPVASGGIHVWHMPALTEIFGDDSVLQFGGGTLGHPWGNAPGAVANRVALEACVQARNEGRDLAREGNEIIREASK.

K4 is subject to N6,N6,N6-trimethyllysine. 2 residues coordinate substrate: N113 and T163. The active-site Proton acceptor is the K165. Residue K167 participates in substrate binding. Mg(2+) is bound by residues K191, D193, and E194. At K191 the chain carries N6-carboxylysine. H284 (proton acceptor) is an active-site residue. 3 residues coordinate substrate: R285, H317, and S369.

This sequence belongs to the RuBisCO large chain family. Type I subfamily. As to quaternary structure, heterohexadecamer of 8 large chains and 8 small chains; disulfide-linked. The disulfide link is formed within the large subunit homodimers. Requires Mg(2+) as cofactor. In terms of processing, the disulfide bond which can form in the large chain dimeric partners within the hexadecamer appears to be associated with oxidative stress and protein turnover.

Its subcellular location is the plastid. The protein resides in the chloroplast. It catalyses the reaction 2 (2R)-3-phosphoglycerate + 2 H(+) = D-ribulose 1,5-bisphosphate + CO2 + H2O. The catalysed reaction is D-ribulose 1,5-bisphosphate + O2 = 2-phosphoglycolate + (2R)-3-phosphoglycerate + 2 H(+). RuBisCO catalyzes two reactions: the carboxylation of D-ribulose 1,5-bisphosphate, the primary event in carbon dioxide fixation, as well as the oxidative fragmentation of the pentose substrate in the photorespiration process. Both reactions occur simultaneously and in competition at the same active site. This chain is Ribulose bisphosphate carboxylase large chain, found in Pteris vittata (Chinese ladder brake).